The sequence spans 237 residues: UPF0502 protein RB6530 (237 aa).

The segment covering 187–202 (ASSAAPSQAESGSTSP) has biased composition (polar residues). The tract at residues 187-211 (ASSAAPSQAESGSTSPAKAANDDRI) is disordered.

It belongs to the UPF0502 family.

In Rhodopirellula baltica (strain DSM 10527 / NCIMB 13988 / SH1), this protein is UPF0502 protein RB6530.